Here is a 91-residue protein sequence, read N- to C-terminus: Phosphocarrier protein NPr (91 aa).

An HPr domain is found at 3–90 (KLERQVTICN…ALVDAKFDEA (88 aa)). Catalysis depends on His-17, which acts as the Pros-phosphohistidine intermediate.

It belongs to the HPr family.

The protein resides in the cytoplasm. Component of the phosphoenolpyruvate-dependent nitrogen-metabolic phosphotransferase system (nitrogen-metabolic PTS), that seems to be involved in regulating nitrogen metabolism. The phosphoryl group from phosphoenolpyruvate (PEP) is transferred to the phosphoryl carrier protein NPr by enzyme I-Ntr. Phospho-NPr then transfers it to EIIA-Ntr. Could function in the transcriptional regulation of sigma-54 dependent operons in conjunction with the NPr (PtsO) and EIIA-Ntr (PtsN) proteins. The sequence is that of Phosphocarrier protein NPr (ptsO) from Shewanella violacea (strain JCM 10179 / CIP 106290 / LMG 19151 / DSS12).